The primary structure comprises 348 residues: Holliday junction branch migration complex subunit RuvB (348 aa).

The interval 4–186 is large ATPase domain (RuvB-L); that stretch reads TDRIISANTV…FGIIQRLEFY (183 aa). Residues Ile25, Arg26, Gly67, Lys70, Thr71, Thr72, 133–135, Arg176, Tyr186, and Arg223 each bind ATP; that span reads EDY. Mg(2+) is bound at residue Thr71. Positions 187–257 are small ATPAse domain (RuvB-S); sequence SVDDLAKIVY…IADKALTMLK (71 aa). The segment at 260-348 is head domain (RuvB-H); it reads PVGFDHMDHK…SSDQQQNLSL (89 aa). DNA contacts are provided by Arg315 and Arg320.

It belongs to the RuvB family. As to quaternary structure, homohexamer. Forms an RuvA(8)-RuvB(12)-Holliday junction (HJ) complex. HJ DNA is sandwiched between 2 RuvA tetramers; dsDNA enters through RuvA and exits via RuvB. An RuvB hexamer assembles on each DNA strand where it exits the tetramer. Each RuvB hexamer is contacted by two RuvA subunits (via domain III) on 2 adjacent RuvB subunits; this complex drives branch migration. In the full resolvosome a probable DNA-RuvA(4)-RuvB(12)-RuvC(2) complex forms which resolves the HJ.

Its subcellular location is the cytoplasm. It catalyses the reaction ATP + H2O = ADP + phosphate + H(+). Its function is as follows. The RuvA-RuvB-RuvC complex processes Holliday junction (HJ) DNA during genetic recombination and DNA repair, while the RuvA-RuvB complex plays an important role in the rescue of blocked DNA replication forks via replication fork reversal (RFR). RuvA specifically binds to HJ cruciform DNA, conferring on it an open structure. The RuvB hexamer acts as an ATP-dependent pump, pulling dsDNA into and through the RuvAB complex. RuvB forms 2 homohexamers on either side of HJ DNA bound by 1 or 2 RuvA tetramers; 4 subunits per hexamer contact DNA at a time. Coordinated motions by a converter formed by DNA-disengaged RuvB subunits stimulates ATP hydrolysis and nucleotide exchange. Immobilization of the converter enables RuvB to convert the ATP-contained energy into a lever motion, pulling 2 nucleotides of DNA out of the RuvA tetramer per ATP hydrolyzed, thus driving DNA branch migration. The RuvB motors rotate together with the DNA substrate, which together with the progressing nucleotide cycle form the mechanistic basis for DNA recombination by continuous HJ branch migration. Branch migration allows RuvC to scan DNA until it finds its consensus sequence, where it cleaves and resolves cruciform DNA. The polypeptide is Holliday junction branch migration complex subunit RuvB (Francisella philomiragia subsp. philomiragia (strain ATCC 25017 / CCUG 19701 / FSC 153 / O#319-036)).